The chain runs to 127 residues: Fluoride-specific ion channel FluC (127 aa).

Helical transmembrane passes span 4-24 (LLLAVFIGGGTGSVARWLLSM), 35-55 (LGTLTANLIGAFIIGMGFAWF), 71-91 (TGFCGGLTTFSTFSAEVVFLL), and 103-123 (VFVNLLGSFAMTALAFWLFSA). Na(+) contacts are provided by G75 and T78.

It belongs to the fluoride channel Fluc/FEX (TC 1.A.43) family.

It localises to the cell inner membrane. It catalyses the reaction fluoride(in) = fluoride(out). With respect to regulation, na(+) is not transported, but it plays an essential structural role and its presence is essential for fluoride channel function. Fluoride-specific ion channel. Important for reducing fluoride concentration in the cell, thus reducing its toxicity. This chain is Fluoride-specific ion channel FluC, found in Escherichia coli (strain ATCC 8739 / DSM 1576 / NBRC 3972 / NCIMB 8545 / WDCM 00012 / Crooks).